The sequence spans 145 residues: Cell division protein SepF (145 aa).

Residues 23-41 (PQEVSKTKDENAKPKHETP) are compositionally biased toward basic and acidic residues. Residues 23–42 (PQEVSKTKDENAKPKHETPK) are disordered.

The protein belongs to the SepF family. In terms of assembly, homodimer. Interacts with FtsZ.

Its subcellular location is the cytoplasm. Functionally, cell division protein that is part of the divisome complex and is recruited early to the Z-ring. Probably stimulates Z-ring formation, perhaps through the cross-linking of FtsZ protofilaments. Its function overlaps with FtsA. The chain is Cell division protein SepF from Caldicellulosiruptor bescii (strain ATCC BAA-1888 / DSM 6725 / KCTC 15123 / Z-1320) (Anaerocellum thermophilum).